The primary structure comprises 496 residues: Acetyltransferase adrJ (496 aa).

Active-site proton acceptor residues include His-174 and Asp-421.

Belongs to the plant acyltransferase family. As to quaternary structure, monomer.

It participates in secondary metabolite biosynthesis; terpenoid biosynthesis. Functionally, acetyltransferase; part of the gene cluster that mediates the biosynthesis of andrastins, meroterpenoid compounds that exhibit inhibitory activity against ras farnesyltransferase, suggesting that they could be promising leads for antitumor agents. The first step of the pathway is the synthesis of 3,5-dimethylorsellinic acid (DMOA) by the polyketide synthase adrD via condensation of one acetyl-CoA starter unit with 3 malonyl-CoA units and 2 methylations. DMAO is then converted to farnesyl-DMAO by the prenyltransferase adrG. The methyltransferase adrK catalyzes the methylation of the carboxyl group of farnesyl-DMAO to farnesyl-DMAO methyl ester which is further converted to epoxyfarnesyl-DMAO methyl ester by the FAD-dependent monooxygenase adrH. The terpene cyclase adrI then catalyzes the carbon skeletal rearrangement to generate the andrastin E, the first compound in the pathway having the andrastin scaffold, with the tetracyclic ring system. The post-cyclization tailoring enzymes adrF, adrE, adrJ, and adrA, are involved in the conversion of andrastin E into andrastin A. The short chain dehydrogenase adrF is responsible for the oxidation of the C-3 a hydroxyl group of andrastin E to yield the corresponding ketone, andrastin D. The ketoreductase adrE stereoselectively reduces the carbonyl moiety to reverse the stereochemistry of the C-3 position to yield andrastin F. The acetyltransferase adrJ is the acetyltransferase that attaches the acetyl group to the C-3 hydroxyl group of andrastin F to yield andrastin C. Finally, the cytochrome P450 monooxygenase adrA catalyzes two sequential oxidation reactions of the C-23 methyl group, to generate the corresponding alcohol andrastin B, and aldehyde andrastin A. This Penicillium roqueforti protein is Acetyltransferase adrJ.